Reading from the N-terminus, the 1218-residue chain is NACHT, LRR and PYD domains-containing protein 1a allele 5 (1218 aa).

Residues 1 to 29 (MGESQSKQESNTRVAQHGSQQDVDPTFQT) are compositionally biased toward polar residues. Disordered stretches follow at residues 1 to 44 (MGES…QVEQ) and 71 to 91 (EMDHESRRHSHQSKKKLDRSE). Positions 77-87 (RRHSHQSKKKL) are enriched in basic residues. The 310-residue stretch at 175-484 (QLVIIEGAAG…EFFAAMSYIL (310 aa)) folds into the NACHT domain. 181–188 (GAAGIGKS) lines the ATP pocket. 3 LRR repeats span residues 343 to 364 (KERNTIIDFNLIGSIPVLLTLC), 673 to 693 (NLEELDLSGNPLSYSAVRSLC), and 730 to 750 (RLAELDLRLNDLGDNGVRQLC). Residues 799–815 (TMPTENTDGEESLTSSK) are compositionally biased toward polar residues. Residues 799-842 (TMPTENTDGEESLTSSKQQQQQSGDKHMEPLGTDDDFWGPSGPV) are disordered. The tract at residues 835–968 (FWGPSGPVST…HFAVLENPSF (134 aa)) is ZU5. The FIIND domain occupies 835–1118 (FWGPSGPVST…LRPALPRMAS (284 aa)). Positions 969 to 1118 (SPMGVLLRMI…LRPALPRMAS (150 aa)) are UPA. One can recognise a CARD domain in the interval 1122-1211 (DAPALLHFVD…HLIMDLLEKS (90 aa)).

Belongs to the NLRP family. Interacts (via LRR repeats) with BCL2 and BCL2L1 (via the loop between motifs BH4 and BH3). Interacts with NOD2; this interaction is enhanced in the presence of muramyl dipeptide (MDP) and increases IL1B release. Interacts with EIF2AK2/PKR; this interaction requires EIF2AK2 activity, is accompanied by EIF2AK2 autophosphorylation and promotes inflammasome assembly in response to danger-associated signals. Interacts with MEFV; this interaction targets Nlrp1a to degradation by autophagy, hence preventing excessive IL1B- and IL18-mediated inflammation. Interacts with DPP9; leading to inhibit activation of the inflammasome. DPP9 acts via formation of a ternary complex, composed of a DPP9 homodimer, one full-length NLRP1 protein, and one cleaved C-terminus of Nlrp1a (NACHT, LRR and PYD domains-containing protein 1a, C-terminus). Interacts with DPP8; leading to inhibit activation of the inflammasome, probably via formation of a ternary complex with DPP8. In terms of assembly, interacts with the C-terminal part of Nlrp1a (NACHT, LRR and PYD domains-containing protein 1a, C-terminus) in absence of pathogens and other damage-associated signals. As to quaternary structure, interacts with the N-terminal part of Nlrp1a (NACHT, LRR and PYD domains-containing protein 1a, N-terminus) in absence of pathogens and other damage-associated signals. Homomultimer; forms the Nlrp1a inflammasome polymeric complex, a filament composed of homopolymers of this form in response to pathogens and other damage-associated signals. The Nlrp1a inflammasome polymeric complex directly recruits pro-caspase-1 (proCASP1) independently of PYCARD/ASC. Interacts (via CARD domain) with CASP1 (via CARD domain); leading to CASP1 activation. Autocatalytically cleaved. Autocatalytic cleavage in FIIND region occurs constitutively, prior to activation signals, and is required for inflammasome activity (IL1B release), possibly by facilitating CASP1 binding. Both N- and C-terminal parts remain associated non-covalently. In terms of processing, ubiquitinated in response to pathogen-associated signals, leading to its degradation by the proteasome and subsequent release of the cleaved C-terminal part of the protein (NACHT, LRR and PYD domains-containing protein 1a, C-terminus), which polymerizes and forms the Nlrp1a inflammasome.

Its subcellular location is the cytoplasm. The protein localises to the cytosol. The protein resides in the nucleus. It localises to the inflammasome. With respect to regulation, activated by pathogens and other damage-associated signals: activation promotes ubiquitination and degradation of the N-terminal part, releasing the cleaved C-terminal part of the protein (NACHT, LRR and PYD domains-containing protein 1a, C-terminus), which polymerizes and forms the Nlrp1a inflammasome. Nlrp1a inflammasome is inhibited by DPP8 and DPP9, which sequester the C-terminal fragment of Nlrp1a (NACHT, LRR and PYD domains-containing protein 1a, C-terminus) in a ternary complex, thereby preventing Nlrp1a oligomerization and activation. Nlrp1a inflammasome is strongly activated by Val-boroPro (Talabostat, PT-100), an inhibitor of dipeptidyl peptidases DPP8 and DPP9. Val-boroPro relieves inhibition of DPP8 and/or DPP9 by promoting disruption of the ternary complex, releasing its C-terminal part from autoinhibition. Not activated by cleavage by B.anthracis lethal toxin (LT) endopeptidase. Highly activated by Toxoplasma gondii. Its function is as follows. Acts as the sensor component of the Nlrp1a inflammasome, which mediates inflammasome activation in response to various pathogen-associated signals, leading to subsequent pyroptosis. Inflammasomes are supramolecular complexes that assemble in the cytosol in response to pathogens and other damage-associated signals and play critical roles in innate immunity and inflammation. Acts as a recognition receptor (PRR): recognizes specific pathogens and other damage-associated signals, such as Val-boroPro inhibitor, and mediates the formation of the inflammasome polymeric complex. In response to pathogen-associated signals, the N-terminal part of Nlrp1a is degraded by the proteasome, releasing the cleaved C-terminal part of the protein (NACHT, LRR and PYD domains-containing protein 1a, C-terminus), which polymerizes to initiate the formation of the inflammasome complex: the inflammasome directly recruits pro-caspase-1 (proCASP1) independently of PYCARD/ASC and promotes caspase-1 (CASP1) activation, which subsequently cleaves and activates inflammatory cytokines IL1B and IL18 and gasdermin-D (GSDMD), leading to pyroptosis. In the absence of GSDMD expression, the Nlrp1a inflammasome is able to recruit and activate CASP8, leading to activation of gasdermin-E (GSDME). Constitutes the precursor of the Nlrp1a inflammasome, which mediates autoproteolytic processing within the FIIND domain to generate the N-terminal and C-terminal parts, which are associated non-covalently in absence of pathogens and other damage-associated signals. In terms of biological role, regulatory part that prevents formation of the Nlrp1a inflammasome: in absence of pathogens and other damage-associated signals, interacts with the C-terminal part of Nlrp1a (NACHT, LRR and PYD domains-containing protein 1a, C-terminus), preventing activation of the Nlrp1a inflammasome. In response to pathogen-associated signals, this part is ubiquitinated by the N-end rule pathway and degraded by the proteasome, releasing the cleaved C-terminal part of the protein, which polymerizes and forms the Nlrp1a inflammasome. Functionally, constitutes the active part of the Nlrp1a inflammasome. In absence of pathogens and other damage-associated signals, interacts with the N-terminal part of Nlrp1a (NACHT, LRR and PYD domains-containing protein 1a, N-terminus), preventing activation of the Nlrp1a inflammasome. In response to pathogen-associated signals, the N-terminal part of Nlrp1a is degraded by the proteasome, releasing this form, which polymerizes to form the Nlrp1a inflammasome complex: the Nlrp1a inflammasome complex then directly recruits pro-caspase-1 (proCASP1) and promotes caspase-1 (CASP1) activation, leading to gasdermin-D (GSDMD) cleavage and subsequent pyroptosis. The protein is NACHT, LRR and PYD domains-containing protein 1a allele 5 of Rattus norvegicus (Rat).